A 462-amino-acid chain; its full sequence is Cysteine--tRNA ligase (462 aa).

Residue cysteine 28 coordinates Zn(2+). Residues methionine 30 to histidine 40 carry the 'HIGH' region motif. The Zn(2+) site is built by cysteine 209, histidine 234, and glutamate 238. Residues lysine 266–serine 270 carry the 'KMSKS' region motif. Lysine 269 contributes to the ATP binding site.

It belongs to the class-I aminoacyl-tRNA synthetase family. Monomer. The cofactor is Zn(2+).

The protein resides in the cytoplasm. It carries out the reaction tRNA(Cys) + L-cysteine + ATP = L-cysteinyl-tRNA(Cys) + AMP + diphosphate. The chain is Cysteine--tRNA ligase from Alkalilimnicola ehrlichii (strain ATCC BAA-1101 / DSM 17681 / MLHE-1).